Consider the following 1004-residue polypeptide: Copper-transporting ATPase (1004 aa).

Over 1–262 the chain is Cytoplasmic; it reads MREVILAVHG…FWKKNSIKST (262 aa). HMA domains follow at residues 2-67 and 80-146; these read REVI…FDCE and KEGL…FDSN. Cu(+)-binding residues include cysteine 13, cysteine 16, cysteine 91, and cysteine 94. Residues 263–283 traverse the membrane as a helical segment; sequence LLAIICMLLYMIVPMMWPTIV. Over 284–303 the chain is Lumenal, vesicle; that stretch reads QDRIFPYKETSFVRGLFYRD. Residues 304 to 324 traverse the membrane as a helical segment; that stretch reads ILGVILASYIQFSVGFYFYKA. Over 325–335 the chain is Cytoplasmic; sequence AWASLKHGSGT. The helical transmembrane segment at 336-356 threads the bilayer; sequence MDTLVCVSTTCAYTFSVFSLV. Over 357–370 the chain is Lumenal, vesicle; sequence HNMFHPSSTGKLPR. The helical transmembrane segment at 371–391 threads the bilayer; sequence IVFDTSIMIISYISIGKYLET. Residues 392-528 lie on the Cytoplasmic side of the membrane; it reads LAKSQTSTAL…IQGYADYLAS (137 aa). A helical membrane pass occupies residues 529–549; the sequence is IFVPGILILAVLTFFIWCFIL. The Lumenal, vesicle segment spans residues 550–577; that stretch reads NISANPPVAFTANTKADNFFICLQTATS. A helical membrane pass occupies residues 578–598; it reads VVIVACPCALGLATPTAIMVG. Topologically, residues 599-901 are cytoplasmic; the sequence is TGVGAQNGVL…LKTFKRIKLN (303 aa). Aspartate 627 (4-aspartylphosphate intermediate) is an active-site residue. Mg(2+)-binding residues include aspartate 838 and aspartate 842. Residues 902 to 924 traverse the membrane as a helical segment; that stretch reads LFWALCYNIFMIPIAMGVLIPWG. Over 925-927 the chain is Lumenal, vesicle; sequence ITL. A helical transmembrane segment spans residues 928–950; it reads PPMLAGLAMAFSSVSVVLSSLML. Residues 951-1004 are Cytoplasmic-facing; it reads KKWTPPDIESHGISDFKSKFSIGNFWSRLFSTRAIAGEQDIESQAGLMSNEEVL.

The protein belongs to the cation transport ATPase (P-type) (TC 3.A.3) family. Type IB subfamily. In terms of assembly, interacts with the copper chaperone ATX1 via the copper anion.

It localises to the golgi apparatus. It is found in the trans-Golgi network membrane. It carries out the reaction Cu(+)(in) + ATP + H2O = Cu(+)(out) + ADP + phosphate + H(+). Copper-transporting P-type ATPase necessary for the proper uptake of iron. Required for export of copper from cytosol into extracytosolic compartment. Retrieves copper from the metallochaperone ATX1 and incorporates it into trans-Golgi vesicles where they are acquired by the cell-surface iron transporter FET3. Required the production of inositolphosphorylceramide D, probably by delivering copper to a yet to be identified enzyme. The protein is Copper-transporting ATPase of Saccharomyces cerevisiae (strain ATCC 204508 / S288c) (Baker's yeast).